The primary structure comprises 263 residues: Leukocyte-associated immunoglobulin-like receptor 1 (263 aa).

The first 21 residues, 1–21, serve as a signal peptide directing secretion; sequence MPLHSVIVLVLVLCLGWKSNT. The 86-residue stretch at 27–112 folds into the Ig-like C2-type domain; sequence SDFTICAEPG…VWSQRSNDLQ (86 aa). Cysteines 49 and 96 form a disulfide. N-linked (GlcNAc...) asparagine glycosylation occurs at Asn87. Residues 144–164 traverse the membrane as a helical segment; that stretch reads ILTVVSVIFLLCLSLFLFCFL. Short sequence motifs (ITIM motif) lie at residues 225-230 and 255-260; these read VTYAQL and STYAAI. A phosphotyrosine mark is found at Tyr227 and Tyr257.

Interacts with SH2 domains of tyrosine-protein phosphatases PTPN6 and PTPN11. The interaction with PTPN6 is constitutive. Interacts with the SH2 domain of CSK. Binds with high affinity to extracellular matrix collagens, the interaction is functionally important. In terms of processing, phosphorylation at Tyr-227 and Tyr-257 activates it. May be phosphorylated by LCK. N-glycosylated. As to expression, expressed in lymphoid and non-lymphoid organs.

The protein localises to the membrane. In terms of biological role, functions as an inhibitory receptor that plays a constitutive negative regulatory role on cytolytic function of natural killer (NK) cells, B-cells and T-cells. Activation by Tyr phosphorylation results in recruitment and activation of the phosphatases PTPN6 and PTPN11. It also reduces the increase of intracellular calcium evoked by B-cell receptor ligation. May also play its inhibitory role independently of SH2-containing phosphatases. Modulates cytokine production in CD4+ T-cells, down-regulating IL2 and IFNG production while inducing secretion of transforming growth factor beta. Also down-regulates IgG and IgE production in B-cells as well as IL8, IL10 and TNF secretion. Inhibits proliferation and induces apoptosis in myeloid leukemia cell lines as well as prevents nuclear translocation of NF-kappa-B p65 subunit/RELA and phosphorylation of I-kappa-B alpha/CHUK in these cells. Inhibits the differentiation of peripheral blood precursors towards dendritic cells. The chain is Leukocyte-associated immunoglobulin-like receptor 1 (Lair1) from Rattus norvegicus (Rat).